Here is a 1357-residue protein sequence, read N- to C-terminus: Major yolk protein (1357 aa).

The N-terminal stretch at 1 to 15 (MRAAILFCLVASSMA) is a signal peptide. Transferrin-like domains lie at 132 to 478 (VRWC…GEVY) and 493 to 1101 (AKIC…AIVK). N-linked (GlcNAc...) asparagine glycosylation is found at Asn-198, Asn-227, Asn-304, Asn-310, Asn-402, Asn-499, Asn-530, Asn-541, Asn-572, Asn-578, Asn-625, Asn-639, Asn-692, Asn-732, Asn-741, Asn-1035, Asn-1043, Asn-1081, Asn-1128, Asn-1208, Asn-1241, and Asn-1258.

The protein belongs to the transferrin family. In terms of tissue distribution, synthesized in the intestines of the females and males and also in ovaries and testis.

The protein localises to the secreted. Functionally, may serve the following two functions: a classical role as a yolk protein precursor and probably shuttle iron to developing germ cells. This Strongylocentrotus purpuratus (Purple sea urchin) protein is Major yolk protein.